Reading from the N-terminus, the 282-residue chain is Phosphatidylserine decarboxylase proenzyme (282 aa).

Catalysis depends on charge relay system; for autoendoproteolytic cleavage activity residues aspartate 85, histidine 142, and serine 244. Serine 244 (schiff-base intermediate with substrate; via pyruvic acid; for decarboxylase activity) is an active-site residue. Serine 244 carries the pyruvic acid (Ser); by autocatalysis modification.

The protein belongs to the phosphatidylserine decarboxylase family. PSD-B subfamily. Prokaryotic type I sub-subfamily. Heterodimer of a large membrane-associated beta subunit and a small pyruvoyl-containing alpha subunit. Pyruvate is required as a cofactor. Post-translationally, is synthesized initially as an inactive proenzyme. Formation of the active enzyme involves a self-maturation process in which the active site pyruvoyl group is generated from an internal serine residue via an autocatalytic post-translational modification. Two non-identical subunits are generated from the proenzyme in this reaction, and the pyruvate is formed at the N-terminus of the alpha chain, which is derived from the carboxyl end of the proenzyme. The autoendoproteolytic cleavage occurs by a canonical serine protease mechanism, in which the side chain hydroxyl group of the serine supplies its oxygen atom to form the C-terminus of the beta chain, while the remainder of the serine residue undergoes an oxidative deamination to produce ammonia and the pyruvoyl prosthetic group on the alpha chain. During this reaction, the Ser that is part of the protease active site of the proenzyme becomes the pyruvoyl prosthetic group, which constitutes an essential element of the active site of the mature decarboxylase.

The protein localises to the cell membrane. It catalyses the reaction a 1,2-diacyl-sn-glycero-3-phospho-L-serine + H(+) = a 1,2-diacyl-sn-glycero-3-phosphoethanolamine + CO2. It participates in phospholipid metabolism; phosphatidylethanolamine biosynthesis; phosphatidylethanolamine from CDP-diacylglycerol: step 2/2. Catalyzes the formation of phosphatidylethanolamine (PtdEtn) from phosphatidylserine (PtdSer). The sequence is that of Phosphatidylserine decarboxylase proenzyme from Coxiella burnetii (strain CbuG_Q212) (Coxiella burnetii (strain Q212)).